We begin with the raw amino-acid sequence, 396 residues long: (S)-8-oxocitronellyl enol synthase ISY2 (396 aa).

NADP(+) contacts are provided by residues 38-40 (TGL), 66-67 (RR), 84-85 (DV), 108-109 (TW), Gln146, Tyr182, Ile209, and 216-218 (SMM). Tyr182 is an active-site residue.

Belongs to the short-chain dehydrogenases/reductases (SDR) family.

It catalyses the reaction (S)-8-oxocitronellyl enol + NADP(+) = (6E)-8-oxogeranial + NADPH + H(+). It carries out the reaction (S)-8-oxocitronellyl enol + NAD(+) = (6E)-8-oxogeranial + NADH + H(+). Functionally, iridoid synthase that catalyzes the first step in generation of the iridoid ring scaffold using the linear monoterpene (6E)-8-oxogeranial as substrate. Iridoids comprise a large family of distinctive bicyclic monoterpenes that possess a wide range of pharmacological activities, including anticancer, anti-inflammatory, antifungal and antibacterial activities. Catalyzes the conversion of the linear monoterpene (6E)-8-oxogeranial to (S)-8-oxocitronellyl enol, a precursor of nepetalactones, which are metabolites that are both insect-repellent and have euphoric effect in cats. This chain is (S)-8-oxocitronellyl enol synthase ISY2, found in Nepeta racemosa (Catmint).